We begin with the raw amino-acid sequence, 201 residues long: MELVLKDAQSALTVSETTFGRDFNEALVHQVVVAYAAGARQGTRAQKTRAEVTGSGKKPWRQKGTGRARSGSIKSPIWRSGGVTFAARPQDHSQKVNKKMYRGALKSILSELVRQDRLIVVEKFSVEAPKTKLLAQKLKDMALDDVLIVTSEVDENLFLAARNLFKVDVRDVAGIDPVSLIAFDKVVMTADAVKQVEEMLA.

The interval 44–71 (RAQKTRAEVTGSGKKPWRQKGTGRARSG) is disordered.

It belongs to the universal ribosomal protein uL4 family. In terms of assembly, part of the 50S ribosomal subunit.

Its function is as follows. One of the primary rRNA binding proteins, this protein initially binds near the 5'-end of the 23S rRNA. It is important during the early stages of 50S assembly. It makes multiple contacts with different domains of the 23S rRNA in the assembled 50S subunit and ribosome. In terms of biological role, forms part of the polypeptide exit tunnel. The polypeptide is Large ribosomal subunit protein uL4 (Edwardsiella ictaluri (strain 93-146)).